The chain runs to 200 residues: 3-isopropylmalate dehydratase small subunit (200 aa).

This sequence belongs to the LeuD family. LeuD type 1 subfamily. In terms of assembly, heterodimer of LeuC and LeuD.

The catalysed reaction is (2R,3S)-3-isopropylmalate = (2S)-2-isopropylmalate. It participates in amino-acid biosynthesis; L-leucine biosynthesis; L-leucine from 3-methyl-2-oxobutanoate: step 2/4. Catalyzes the isomerization between 2-isopropylmalate and 3-isopropylmalate, via the formation of 2-isopropylmaleate. This is 3-isopropylmalate dehydratase small subunit from Vibrio cholerae serotype O1 (strain ATCC 39541 / Classical Ogawa 395 / O395).